We begin with the raw amino-acid sequence, 398 residues long: S-adenosylmethionine decarboxylase proenzyme (398 aa).

Catalysis depends on residues Glu-18 and Glu-21. Residue Ser-78 is the Schiff-base intermediate with substrate; via pyruvic acid of the active site. Position 78 is a pyruvic acid (Ser); by autocatalysis (Ser-78). Cys-92 acts as the Proton donor; for catalytic activity in catalysis. Catalysis depends on proton acceptor; for processing activity residues Ser-243 and His-256.

The protein belongs to the eukaryotic AdoMetDC family. It depends on pyruvate as a cofactor. Is synthesized initially as an inactive proenzyme. Formation of the active enzyme involves a self-maturation process in which the active site pyruvoyl group is generated from an internal serine residue via an autocatalytic post-translational modification. Two non-identical subunits are generated from the proenzyme in this reaction, and the pyruvate is formed at the N-terminus of the alpha chain, which is derived from the carboxyl end of the proenzyme. The post-translation cleavage follows an unusual pathway, termed non-hydrolytic serinolysis, in which the side chain hydroxyl group of the serine supplies its oxygen atom to form the C-terminus of the beta chain, while the remainder of the serine residue undergoes an oxidative deamination to produce ammonia and the pyruvoyl group blocking the N-terminus of the alpha chain.

The catalysed reaction is S-adenosyl-L-methionine + H(+) = S-adenosyl 3-(methylsulfanyl)propylamine + CO2. Its pathway is amine and polyamine biosynthesis; S-adenosylmethioninamine biosynthesis; S-adenosylmethioninamine from S-adenosyl-L-methionine: step 1/1. This is S-adenosylmethionine decarboxylase proenzyme (SAMDC) from Oryza sativa subsp. indica (Rice).